The sequence spans 309 residues: 5-oxoprolinase subunit C (309 aa).

Belongs to the PxpC family. As to quaternary structure, forms a complex composed of PxpA, PxpB and PxpC.

It catalyses the reaction 5-oxo-L-proline + ATP + 2 H2O = L-glutamate + ADP + phosphate + H(+). Catalyzes the cleavage of 5-oxoproline to form L-glutamate coupled to the hydrolysis of ATP to ADP and inorganic phosphate. The sequence is that of 5-oxoprolinase subunit C from Haemophilus influenzae (strain ATCC 51907 / DSM 11121 / KW20 / Rd).